The following is a 480-amino-acid chain: Aromatic-L-amino-acid decarboxylase (480 aa).

Lys292 is modified (N6-(pyridoxal phosphate)lysine).

This sequence belongs to the group II decarboxylase family. The cofactor is pyridoxal 5'-phosphate.

It carries out the reaction L-tryptophan + H(+) = tryptamine + CO2. It catalyses the reaction L-phenylalanine + H(+) = 2-phenylethylamine + CO2. The enzyme catalyses 5-hydroxy-L-tryptophan + H(+) = serotonin + CO2. The catalysed reaction is L-dopa + H(+) = dopamine + CO2. In terms of biological role, involved in bacillamide C biosynthesis. Catalyzes the decarboxylation of L-tryptophan to tryptamine. The tryptamine obtained is then probably incorporated into the bacillamide C peptide, which is derived from the amino acids alanine, cysteine and tryptophan through nonribosomal peptide synthetase (NRPS) biosynthesis strategy. L-tryptophan is the best substrate, but the enzyme displays broad substrate specificity for various aromatic amino acids in vitro and it can also catalyze the decarboxylation of L-phenylalanine, 5-hydroxy-L-tryptophan (L-HTP) and L-DOPA, with lower efficiency. Exhibits weak activity with L-tyrosine. The polypeptide is Aromatic-L-amino-acid decarboxylase (Bacillus atrophaeus).